A 96-amino-acid polypeptide reads, in one-letter code: Protein C4 (96 aa).

A lipid anchor (N-myristoyl glycine; by host) is attached at glycine 2. The segment at 66–96 (STDDLQGEDSRQPMTLTPRQLTQDVSRRLLM) is disordered. Over residues 77 to 89 (QPMTLTPRQLTQD) the composition is skewed to polar residues.

This sequence belongs to the geminiviridae protein AC4/C4 family.

The protein resides in the host cell membrane. Its function is as follows. Pathogenicity determinant. May act as a suppressor of RNA-mediated gene silencing, also known as post-transcriptional gene silencing (PTGS), a mechanism of plant viral defense that limits the accumulation of viral RNAs. In Solanum lycopersicum (Tomato), this protein is Protein C4.